The primary structure comprises 312 residues: Ribosomal RNA small subunit methyltransferase H (312 aa).

Residues 30-32, Asp-50, Phe-80, Asp-98, and Gln-105 contribute to the S-adenosyl-L-methionine site; that span reads GGH.

This sequence belongs to the methyltransferase superfamily. RsmH family.

The protein resides in the cytoplasm. It carries out the reaction cytidine(1402) in 16S rRNA + S-adenosyl-L-methionine = N(4)-methylcytidine(1402) in 16S rRNA + S-adenosyl-L-homocysteine + H(+). In terms of biological role, specifically methylates the N4 position of cytidine in position 1402 (C1402) of 16S rRNA. This Lawsonia intracellularis (strain PHE/MN1-00) protein is Ribosomal RNA small subunit methyltransferase H.